The chain runs to 139 residues: Transcription antitermination protein NusB (139 aa).

It belongs to the NusB family.

In terms of biological role, involved in transcription antitermination. Required for transcription of ribosomal RNA (rRNA) genes. Binds specifically to the boxA antiterminator sequence of the ribosomal RNA (rrn) operons. This Salmonella agona (strain SL483) protein is Transcription antitermination protein NusB.